Reading from the N-terminus, the 465-residue chain is Cytochrome P450 85A1 (465 aa).

The helical transmembrane segment at 2-22 (GAMMVMMGLLLIIVSLCSALL) threads the bilayer. Position 415 (Cys415) interacts with heme.

The protein belongs to the cytochrome P450 family. Heme serves as cofactor. As to expression, mainly expressed in apical shoots, hypocotyls, siliques and roots. Also present in the female gametophyte.

It is found in the membrane. It catalyses the reaction 6-deoxoteasterone + reduced [NADPH--hemoprotein reductase] + O2 = 6alpha-hydroxyteasterone + oxidized [NADPH--hemoprotein reductase] + H2O + H(+). It carries out the reaction 6alpha-hydroxytyphasterol + reduced [NADPH--hemoprotein reductase] + O2 = teasterone + oxidized [NADPH--hemoprotein reductase] + 2 H2O + H(+). The enzyme catalyses 3-dehydro-6-deoxoteasterone + reduced [NADPH--hemoprotein reductase] + O2 = 3-dehydro-6alpha-hydroxyteasterone + oxidized [NADPH--hemoprotein reductase] + H2O + H(+). The catalysed reaction is 3-dehydro-6alpha-hydroxyteasterone + reduced [NADPH--hemoprotein reductase] + O2 = 3-dehydroteasterone + oxidized [NADPH--hemoprotein reductase] + 2 H2O + H(+). It catalyses the reaction 6-deoxotyphasterol + reduced [NADPH--hemoprotein reductase] + O2 = 6alpha-hydroxytyphasterol + oxidized [NADPH--hemoprotein reductase] + H2O + H(+). It carries out the reaction 6alpha-hydroxytyphasterol + reduced [NADPH--hemoprotein reductase] + O2 = typhasterol + oxidized [NADPH--hemoprotein reductase] + 2 H2O + H(+). The enzyme catalyses 6-deoxocastasterone + reduced [NADPH--hemoprotein reductase] + O2 = 6alpha-hydroxycastasterone + oxidized [NADPH--hemoprotein reductase] + H2O + H(+). The catalysed reaction is 6alpha-hydroxycastasterone + reduced [NADPH--hemoprotein reductase] + O2 = castasterone + oxidized [NADPH--hemoprotein reductase] + 2 H2O + H(+). It catalyses the reaction 6-deoxocastasterone + 2 reduced [NADPH--hemoprotein reductase] + 2 O2 = castasterone + 2 oxidized [NADPH--hemoprotein reductase] + 3 H2O + 2 H(+). It carries out the reaction 6-deoxoteasterone + 2 reduced [NADPH--hemoprotein reductase] + 2 O2 = teasterone + 2 oxidized [NADPH--hemoprotein reductase] + 3 H2O + 2 H(+). The enzyme catalyses 6-deoxotyphasterol + 2 reduced [NADPH--hemoprotein reductase] + 2 O2 = typhasterol + 2 oxidized [NADPH--hemoprotein reductase] + 3 H2O + 2 H(+). The catalysed reaction is 3-dehydro-6-deoxoteasterone + 2 reduced [NADPH--hemoprotein reductase] + 2 O2 = 3-dehydroteasterone + 2 oxidized [NADPH--hemoprotein reductase] + 3 H2O + 2 H(+). The protein operates within plant hormone biosynthesis; brassinosteroid biosynthesis. In terms of biological role, catalyzes the C6-oxidation step in brassinosteroids biosynthesis. Converts 6-deoxocastasterone (6-deoxoCS) to castasterone (CS). May also convert 6-deoxoteasterone (6-deoxoTE) to teasterone (TE), 3-dehydro-6-deoxoteasterone (6-deoxo3DT, 6-deoxo-3-DHT) to 3-dehydroteasterone (3DT, 3-DHT), and 6-deoxotyphasterol (6-deoxoTY) to typhasterol (TY). Required for the initiation of female gametogenesis (megagametogenesis). The chain is Cytochrome P450 85A1 from Arabidopsis thaliana (Mouse-ear cress).